The following is a 946-amino-acid chain: Protein translocase subunit SecA (946 aa).

Residues Gln-87, 105 to 109 (GEGKT), and Asp-524 contribute to the ATP site. The tract at residues 904–933 (PAQTTDKADRDPNKPETWGKVGRNEDCPCG) is disordered. The Zn(2+) site is built by Cys-930, Cys-932, Cys-941, and His-942.

It belongs to the SecA family. In terms of assembly, monomer and homodimer. Part of the essential Sec protein translocation apparatus which comprises SecA, SecYEG and auxiliary proteins SecDF-YajC and YidC. The cofactor is Zn(2+).

Its subcellular location is the cell inner membrane. The protein localises to the cytoplasm. The catalysed reaction is ATP + H2O + cellular proteinSide 1 = ADP + phosphate + cellular proteinSide 2.. Its function is as follows. Part of the Sec protein translocase complex. Interacts with the SecYEG preprotein conducting channel. Has a central role in coupling the hydrolysis of ATP to the transfer of proteins into and across the cell membrane, serving both as a receptor for the preprotein-SecB complex and as an ATP-driven molecular motor driving the stepwise translocation of polypeptide chains across the membrane. The sequence is that of Protein translocase subunit SecA from Rhodopseudomonas palustris (strain TIE-1).